The following is a 61-amino-acid chain: Short neurotoxin 1 (61 aa).

Intrachain disulfides connect C3–C23, C17–C40, C42–C53, and C54–C59.

It belongs to the three-finger toxin family. Short-chain subfamily. Type I alpha-neurotoxin sub-subfamily. In terms of tissue distribution, expressed by the venom gland.

The protein resides in the secreted. Binds with high affinity to muscular nicotinic acetylcholine receptors (nAChRs) (tested on Torpedo marmorata AChR, Kd=0.07 nM) and with low affinity to neuronal alpha-7/CHRNA7 nAChRs (tested on chimeric receptor, Kd=3 uM) and inhibit acetylcholine from binding to the receptor, thereby impairing neuromuscular transmission. Produces peripheral paralysis by blocking neuromuscular transmission at the postsynaptic site. In Naja pallida (Red spitting cobra), this protein is Short neurotoxin 1.